The chain runs to 384 residues: Succinyl-diaminopimelate desuccinylase (384 aa).

Zn(2+) is bound at residue H71. D73 is a catalytic residue. Residue D104 participates in Zn(2+) binding. The active-site Proton acceptor is the E138. Residues E139, E167, and H353 each coordinate Zn(2+).

Belongs to the peptidase M20A family. DapE subfamily. In terms of assembly, homodimer. It depends on Zn(2+) as a cofactor. Co(2+) is required as a cofactor.

It carries out the reaction N-succinyl-(2S,6S)-2,6-diaminopimelate + H2O = (2S,6S)-2,6-diaminopimelate + succinate. It functions in the pathway amino-acid biosynthesis; L-lysine biosynthesis via DAP pathway; LL-2,6-diaminopimelate from (S)-tetrahydrodipicolinate (succinylase route): step 3/3. In terms of biological role, catalyzes the hydrolysis of N-succinyl-L,L-diaminopimelic acid (SDAP), forming succinate and LL-2,6-diaminopimelate (DAP), an intermediate involved in the bacterial biosynthesis of lysine and meso-diaminopimelic acid, an essential component of bacterial cell walls. This chain is Succinyl-diaminopimelate desuccinylase, found in Aromatoleum aromaticum (strain DSM 19018 / LMG 30748 / EbN1) (Azoarcus sp. (strain EbN1)).